The primary structure comprises 247 residues: E3 ubiquitin-protein ligase RNF182 (247 aa).

The segment at 20–68 adopts an RING-type zinc-finger fold; it reads CKICYNRYNLKQRKPKVLECCHRVCAKCLYKIIDFGDSPQGVIVCPFCR. 2 helical membrane passes run 184–204 and 211–231; these read VLVW…IYLL and LGVV…VYGF.

Interacts with ATP6V0C. Up-regulated in neuronal cells subjected to cell death-inducing injuries, such as oxygen and glucose deprivation (at protein level). Could be up-regulated in Alzheimer disease brains. Highly expressed in innate immune organs such as lymph nodes and spleen and in immune cells such as macrophages and dendritic cells.

It localises to the membrane. Its subcellular location is the cytoplasm. The enzyme catalyses S-ubiquitinyl-[E2 ubiquitin-conjugating enzyme]-L-cysteine + [acceptor protein]-L-lysine = [E2 ubiquitin-conjugating enzyme]-L-cysteine + N(6)-ubiquitinyl-[acceptor protein]-L-lysine.. It functions in the pathway protein modification; protein ubiquitination. E3 ubiquitin-protein ligase that mediates the ubiquitination of ATP6V0C and targets it to degradation via the ubiquitin-proteasome pathway. Also plays a role in the inhibition of TLR-triggered innate immune response by mediating 'Lys'-48-linked ubiquitination and subsequent degradation of NF-kappa-B component RELA. The protein is E3 ubiquitin-protein ligase RNF182 (RNF182) of Homo sapiens (Human).